The following is a 259-amino-acid chain: MALLEICCYSMECALTAQRNGADRIELCAAPKEGGLTPSFGILRSVREHITIPVHPIIRPRGGDFYYTDGEFAAMLEDIRLVRELGFPGLVTGVLTVDGDVDMSRMEKIMAAAGPLAVTFHRAFDMCANPFNALKNLADAGVARVLTSGQKADAAQGLSIIMELIAQGDAPIIMAGAGVRANNLQNFLDAGVREVHSSAGVLLPSPMRYRNQGLSMSADIQADEYSRYRVEGAAVAENERNHCSPSGQMIFTVASCRPI.

It belongs to the CutC family. In terms of assembly, homodimer.

The protein localises to the cytoplasm. The protein is PF03932 family protein CutC of Salmonella typhi.